Consider the following 242-residue polypeptide: tRNA pseudouridine synthase A (242 aa).

Asp-51 functions as the Nucleophile in the catalytic mechanism. Tyr-107 provides a ligand contact to substrate.

Belongs to the tRNA pseudouridine synthase TruA family. Homodimer.

The catalysed reaction is uridine(38/39/40) in tRNA = pseudouridine(38/39/40) in tRNA. Its function is as follows. Formation of pseudouridine at positions 38, 39 and 40 in the anticodon stem and loop of transfer RNAs. The protein is tRNA pseudouridine synthase A of Helicobacter pylori (strain G27).